The sequence spans 150 residues: MKPEAGDGRSGWRWVATFDLILRLAAIVATSTAVLAAMGKTFVVVVNGVACFYLLMSLPVSIFNIMRPGACPANRAVLTALDMVTVALVTAGALVAGILYLVHKAGDTHADWFSIWSQLDSLSYLAVLALILHVLLSGSILYKQALNIMF.

Residues 1 to 17 (MKPEAGDGRSGWRWVAT) are Cytoplasmic-facing. Residues 18–38 (FDLILRLAAIVATSTAVLAAM) traverse the membrane as a helical segment. Residues 39-41 (GKT) lie on the Extracellular side of the membrane. Residues 42–62 (FVVVVNGVACFYLLMSLPVSI) form a helical membrane-spanning segment. At 63-82 (FNIMRPGACPANRAVLTALD) the chain is on the cytoplasmic side. A helical transmembrane segment spans residues 83–103 (MVTVALVTAGALVAGILYLVH). Topologically, residues 104–121 (KAGDTHADWFSIWSQLDS) are extracellular. A helical transmembrane segment spans residues 122-142 (LSYLAVLALILHVLLSGSILY). Residues 143 to 150 (KQALNIMF) lie on the Cytoplasmic side of the membrane.

It belongs to the Casparian strip membrane proteins (CASP) family. In terms of assembly, homodimer and heterodimers.

It localises to the cell membrane. This chain is CASP-like protein 2, found in Picea sitchensis (Sitka spruce).